The sequence spans 297 residues: N-acetylneuraminate lyase (297 aa).

Positions 47 and 48 each coordinate aceneuramate. Residue tyrosine 137 is the Proton donor of the active site. Lysine 165 (schiff-base intermediate with substrate) is an active-site residue. The aceneuramate site is built by threonine 167, glycine 189, aspartate 191, glutamate 192, and serine 208.

This sequence belongs to the DapA family. NanA subfamily. In terms of assembly, homotetramer.

It localises to the cytoplasm. The catalysed reaction is aceneuramate = aldehydo-N-acetyl-D-mannosamine + pyruvate. Its pathway is amino-sugar metabolism; N-acetylneuraminate degradation; D-fructose 6-phosphate from N-acetylneuraminate: step 1/5. In terms of biological role, catalyzes the reversible aldol cleavage of N-acetylneuraminic acid (sialic acid; Neu5Ac) to form pyruvate and N-acetylmannosamine (ManNAc) via a Schiff base intermediate. The polypeptide is N-acetylneuraminate lyase (Salmonella choleraesuis (strain SC-B67)).